We begin with the raw amino-acid sequence, 187 residues long: Methylamine dehydrogenase light chain (187 aa).

Positions 1–57 (MKKDTGFDSKIEKLARTTASKTGRRGFIGRLGGFLVGSALLPLLPVDRRSRLGGEVQ) form a signal peptide, tat-type signal. Disulfide bonds link C79/C144, C85/C117, C92/C177, C94/C142, C102/C133, and C134/C165. The residue at position 113 (W113) is a Tryptophylquinone. The tryptophan tryptophylquinone (Trp-Trp) cross-link spans 113–164 (WVASCYNPGDQQTYLIAYRDCCGKQTCGRCNCVNTQGELPVYRPEFNNDIVW).

It belongs to the aromatic amine dehydrogenase light chain family. As to quaternary structure, heterotetramer of two light and two heavy chains. Tryptophan tryptophylquinone residue serves as cofactor. In terms of processing, predicted to be exported by the Tat system. The position of the signal peptide cleavage has not been experimentally proven. Tryptophan tryptophylquinone (TTQ) is formed by oxidation of the indole ring of a tryptophan to form tryptophylquinone followed by covalent cross-linking with another tryptophan residue.

The protein resides in the periplasm. It carries out the reaction 2 oxidized [amicyanin] + methylamine + H2O = 2 reduced [amicyanin] + formaldehyde + NH4(+) + 2 H(+). It functions in the pathway one-carbon metabolism; methylamine degradation; formaldehyde from methylamine: step 1/1. Its function is as follows. Methylamine dehydrogenase carries out the oxidation of methylamine. Electrons are passed from methylamine dehydrogenase to amicyanin. The chain is Methylamine dehydrogenase light chain (mauA) from Methylophilus methylotrophus (Bacterium W3A1).